The chain runs to 155 residues: 6,7-dimethyl-8-ribityllumazine synthase (155 aa).

5-amino-6-(D-ribitylamino)uracil contacts are provided by residues Phe23, 57-59 (AFE), and 81-83 (AVI). 86-87 (ST) contributes to the (2S)-2-hydroxy-3-oxobutyl phosphate binding site. Catalysis depends on His89, which acts as the Proton donor. Phe114 contributes to the 5-amino-6-(D-ribitylamino)uracil binding site. Arg128 serves as a coordination point for (2S)-2-hydroxy-3-oxobutyl phosphate.

The protein belongs to the DMRL synthase family.

It carries out the reaction (2S)-2-hydroxy-3-oxobutyl phosphate + 5-amino-6-(D-ribitylamino)uracil = 6,7-dimethyl-8-(1-D-ribityl)lumazine + phosphate + 2 H2O + H(+). The protein operates within cofactor biosynthesis; riboflavin biosynthesis; riboflavin from 2-hydroxy-3-oxobutyl phosphate and 5-amino-6-(D-ribitylamino)uracil: step 1/2. Catalyzes the formation of 6,7-dimethyl-8-ribityllumazine by condensation of 5-amino-6-(D-ribitylamino)uracil with 3,4-dihydroxy-2-butanone 4-phosphate. This is the penultimate step in the biosynthesis of riboflavin. The polypeptide is 6,7-dimethyl-8-ribityllumazine synthase (Dehalococcoides mccartyi (strain ATCC BAA-2266 / KCTC 15142 / 195) (Dehalococcoides ethenogenes (strain 195))).